Here is a 657-residue protein sequence, read N- to C-terminus: Glycogen debranching enzyme (657 aa).

The active-site Nucleophile is the aspartate 336. Glutamate 371 functions as the Proton donor in the catalytic mechanism. The disordered stretch occupies residues 460-479 (ANGEENRDGTNNNYSNNHGK).

Belongs to the glycosyl hydrolase 13 family.

The catalysed reaction is Hydrolysis of (1-&gt;6)-alpha-D-glucosidic linkages to branches with degrees of polymerization of three or four glucose residues in limit dextrin.. It participates in glycan degradation; glycogen degradation. Its function is as follows. Removes maltotriose and maltotetraose chains that are attached by 1,6-alpha-linkage to the limit dextrin main chain, generating a debranched limit dextrin. The protein is Glycogen debranching enzyme of Shigella dysenteriae serotype 1 (strain Sd197).